We begin with the raw amino-acid sequence, 952 residues long: Serine/threonine-protein kinase atg1 (952 aa).

The Protein kinase domain maps to 23-329 (FTINEQIGKG…FPEYFAHPVV (307 aa)). ATP-binding positions include 29–37 (IGKGSFATV) and Lys-52. Asp-166 serves as the catalytic Proton acceptor. Disordered regions lie at residues 331–478 (EPIP…EAEQ), 510–573 (GRAN…SSPS), 783–806 (RLPE…GGSS), and 920–952 (AIAK…TPPK). Composition is skewed to basic and acidic residues over residues 338–347 (GDDRPKEKSP) and 356–372 (SLRD…HIDT). Residues 386–398 (SPRTPNIESNQPF) are compositionally biased toward polar residues. Residues 429–439 (PRQRDRKDRTE) show a composition bias toward basic and acidic residues. 3 stretches are compositionally biased toward polar residues: residues 459–475 (ANLQ…SITE), 553–573 (PDTS…SSPS), and 793–806 (NNRS…GGSS). The span at 933–952 (SPRRSYSGGTTPTINNTPPK) shows a compositional bias: low complexity.

Belongs to the protein kinase superfamily. Ser/Thr protein kinase family. APG1/unc-51/ULK1 subfamily. As to quaternary structure, homodimer. Forms a ternary complex with ATG13 and ATG17.

The protein localises to the cytoplasm. The protein resides in the preautophagosomal structure membrane. It carries out the reaction L-seryl-[protein] + ATP = O-phospho-L-seryl-[protein] + ADP + H(+). It catalyses the reaction L-threonyl-[protein] + ATP = O-phospho-L-threonyl-[protein] + ADP + H(+). Functionally, serine/threonine protein kinase involved in the cytoplasm to vacuole transport (Cvt) and found to be essential in autophagy, where it is required for the formation of autophagosomes. Involved in the clearance of protein aggregates which cannot be efficiently cleared by the proteasome. Required for selective autophagic degradation of the nucleus (nucleophagy) as well as for mitophagy which contributes to regulate mitochondrial quantity and quality by eliminating the mitochondria to a basal level to fulfill cellular energy requirements and preventing excess ROS production. Also involved in endoplasmic reticulum-specific autophagic process, in selective removal of ER-associated degradation (ERAD) substrates. Plays a key role in ATG9 and ATG23 cycling through the pre-autophagosomal structure and is necessary to promote ATG18 binding to ATG9 through phosphorylation of ATG9. Catalyzes phosphorylation of ATG4, decreasing the interaction between ATG4 and ATG8 and impairing deconjugation of PE-conjugated forms of ATG8. The protein is Serine/threonine-protein kinase atg1 of Botryotinia fuckeliana (strain B05.10) (Noble rot fungus).